A 463-amino-acid polypeptide reads, in one-letter code: Stress-activated protein kinase jnk-1 (463 aa).

Residues 1 to 12 (MEERLSTTSSYP) are compositionally biased toward polar residues. The interval 1 to 23 (MEERLSTTSSYPSHPGRSVEEDH) is disordered. A Protein kinase domain is found at 119-412 (YQNLRLIGSG…ISVDDALRHP (294 aa)). ATP is bound by residues 126-131 (GSGAQG) and Lys148. Asp244 acts as the Proton acceptor in catalysis. Thr276 is subject to Phosphothreonine. The TXY motif lies at 276–278 (TPY). The residue at position 278 (Tyr278) is a Phosphotyrosine.

Belongs to the protein kinase superfamily. CMGC Ser/Thr protein kinase family. MAP kinase subfamily. Binds to the scaffolding protein, unc-16. Unc-16 also binds other components of the JNK signaling pathway. Interacts with daf-16. It depends on Mg(2+) as a cofactor. In terms of processing, dually phosphorylated on Thr-276 and Tyr-278, which activates the enzyme. As to expression, expressed in most neurons, including nerve ring, head ganglions, dorsal and ventral nerve cords and tail ganglions. The Thr-276/Tyr-278 phosphorylated form is present in the nerve ring upon heat exposure.

The protein localises to the cytoplasm. Its subcellular location is the perikaryon. It is found in the cell projection. It localises to the axon. It catalyses the reaction L-seryl-[protein] + ATP = O-phospho-L-seryl-[protein] + ADP + H(+). It carries out the reaction L-threonyl-[protein] + ATP = O-phospho-L-threonyl-[protein] + ADP + H(+). Its activity is regulated as follows. Activated by threonine and tyrosine phosphorylation by either of the dual specificity kinases, jkk-1 and mek-1. Its function is as follows. Serine/threonine-protein kinase which responds to activation by environmental stress by phosphorylating a number of transcription factors such as daf-16, and thus regulates transcriptional activity. By phosphorylating daf-16, plays a role in daf-16 nuclear translocation in intestinal cells in response to environmental stresses such as heat and oxidative stresses. Downstream of jkk-1, may coordinate locomotion via type-D GABAergic motoneurons and regulates synaptic vesicle transport in conjunction with unc-16. Independently of jkk-1, may regulate some mechanosensory responses, such as response to touch. Independently of jkk-1 and downstream of mek-1, plays a role in resistance to heavy metals, such as Cu(2+) or Cd(2+). Regulates germline cell apoptosis in response to heavy metals such as Cu(2+) and arsenite. Required for dopaminergic CEP neuron degeneration in response to Mn(2+). Required for normal sleep bout quantity and arousal thresholds during the transition from the last larval stage to adulthood in well-fed animals. Downstream of jkk-1 but independently of mek-1, positively regulates lifespan. The sequence is that of Stress-activated protein kinase jnk-1 (jnk-1) from Caenorhabditis elegans.